The primary structure comprises 308 residues: D-alanine--D-alanine ligase (308 aa).

The ATP-grasp domain maps to 103–302; it reads KFVFRAAGLP…YGELVSWMVE (200 aa). 130-184 lines the ATP pocket; it reads MDPPYVIKPVSEGSSVGVFIVRAGDNRPPAELTSAEWNLGDEVMAERYIAGRELT. Residues D252, E269, and N271 each contribute to the Mg(2+) site.

It belongs to the D-alanine--D-alanine ligase family. It depends on Mg(2+) as a cofactor. Mn(2+) serves as cofactor.

Its subcellular location is the cytoplasm. It catalyses the reaction 2 D-alanine + ATP = D-alanyl-D-alanine + ADP + phosphate + H(+). It participates in cell wall biogenesis; peptidoglycan biosynthesis. In terms of biological role, cell wall formation. The chain is D-alanine--D-alanine ligase from Parvibaculum lavamentivorans (strain DS-1 / DSM 13023 / NCIMB 13966).